A 394-amino-acid polypeptide reads, in one-letter code: Aspergillopepsin-1 (394 aa).

Positions 1 to 20 (MVVFSKTAALVLGLSTAVSA) are cleaved as a signal peptide. The propeptide at 21–69 (APAPTRKGFTINQIARPANKTRTVNLPGLYARSLAKFGGTVPQSVKEAA) is activation peptide. A Peptidase A1 domain is found at 85–391 (YLTPVTVGKS…NSEGPKLGFA (307 aa)). Asp101 is a catalytic residue. Ser129 and Ser304 each carry an O-linked (Man...) serine glycan. Cys319 and Cys354 are disulfide-bonded.

It belongs to the peptidase A1 family. Monomer.

It localises to the secreted. The catalysed reaction is Hydrolysis of proteins with broad specificity. Generally favors hydrophobic residues in P1 and P1', but also accepts Lys in P1, which leads to activation of trypsinogen. Does not clot milk.. In terms of biological role, secreted aspartic endopeptidase that allows assimilation of proteinaceous substrates. The scissile peptide bond is attacked by a nucleophilic water molecule activated by two aspartic residues in the active site. Shows a broad primary substrate specificity. Favors hydrophobic residues at the P1 and P1' positions, but also accepts a lysine residue in the P1 position, leading to the activation of trypsinogen and chymotrypsinogen A. The chain is Aspergillopepsin-1 (pepA) from Aspergillus phoenicis (Aspergillus saitoi).